Reading from the N-terminus, the 272-residue chain is Ribosomal RNA small subunit methyltransferase A (272 aa).

Residues Asn18, Leu20, Gly45, Glu66, Asp91, and Asn113 each contribute to the S-adenosyl-L-methionine site.

It belongs to the class I-like SAM-binding methyltransferase superfamily. rRNA adenine N(6)-methyltransferase family. RsmA subfamily.

It is found in the cytoplasm. It catalyses the reaction adenosine(1518)/adenosine(1519) in 16S rRNA + 4 S-adenosyl-L-methionine = N(6)-dimethyladenosine(1518)/N(6)-dimethyladenosine(1519) in 16S rRNA + 4 S-adenosyl-L-homocysteine + 4 H(+). Functionally, specifically dimethylates two adjacent adenosines (A1518 and A1519) in the loop of a conserved hairpin near the 3'-end of 16S rRNA in the 30S particle. May play a critical role in biogenesis of 30S subunits. This is Ribosomal RNA small subunit methyltransferase A from Yersinia pseudotuberculosis serotype O:1b (strain IP 31758).